The chain runs to 262 residues: Pyridoxine 5'-phosphate synthase (262 aa).

Asparagine 6 serves as a coordination point for 3-amino-2-oxopropyl phosphate. 8–9 (DH) is a 1-deoxy-D-xylulose 5-phosphate binding site. Arginine 17 contributes to the 3-amino-2-oxopropyl phosphate binding site. Residue histidine 43 is the Proton acceptor of the active site. 1-deoxy-D-xylulose 5-phosphate-binding residues include arginine 45 and histidine 50. Glutamate 70 functions as the Proton acceptor in the catalytic mechanism. Position 102 (threonine 102) interacts with 1-deoxy-D-xylulose 5-phosphate. Histidine 215 functions as the Proton donor in the catalytic mechanism. 3-amino-2-oxopropyl phosphate-binding positions include glycine 216 and 237–238 (GH).

Belongs to the PNP synthase family. In terms of assembly, homooctamer; tetramer of dimers.

Its subcellular location is the cytoplasm. The catalysed reaction is 3-amino-2-oxopropyl phosphate + 1-deoxy-D-xylulose 5-phosphate = pyridoxine 5'-phosphate + phosphate + 2 H2O + H(+). Its pathway is cofactor biosynthesis; pyridoxine 5'-phosphate biosynthesis; pyridoxine 5'-phosphate from D-erythrose 4-phosphate: step 5/5. Functionally, catalyzes the complicated ring closure reaction between the two acyclic compounds 1-deoxy-D-xylulose-5-phosphate (DXP) and 3-amino-2-oxopropyl phosphate (1-amino-acetone-3-phosphate or AAP) to form pyridoxine 5'-phosphate (PNP) and inorganic phosphate. This chain is Pyridoxine 5'-phosphate synthase, found in Helicobacter pylori (strain ATCC 700392 / 26695) (Campylobacter pylori).